The following is a 68-amino-acid chain: Neuronal regeneration-related protein (68 aa).

This is Neuronal regeneration-related protein (NREP) from Gallus gallus (Chicken).